A 130-amino-acid polypeptide reads, in one-letter code: Protein ApaG (130 aa).

Residues 3 to 127 (STITRDIQIT…FSLDSPFSRQ (125 aa)) enclose the ApaG domain.

The polypeptide is Protein ApaG (Beijerinckia indica subsp. indica (strain ATCC 9039 / DSM 1715 / NCIMB 8712)).